Here is a 199-residue protein sequence, read N- to C-terminus: Secreted chorismate mutase (199 aa).

An N-terminal signal peptide occupies residues 1–33 (MLTRPREIYLATAVSIGILLSLIAPLGPPLARA). The Chorismate mutase domain occupies 34–113 (DGTSQLAELV…ATEAIEYSRF (80 aa)). Substrate-binding positions include Arg49, Lys60, Asp69, 72-76 (RVEQQ), 105-109 (TEAIE), and Arg134. An intrachain disulfide couples Cys160 to Cys193.

As to quaternary structure, homodimer.

The protein localises to the secreted. It carries out the reaction chorismate = prephenate. The protein operates within metabolic intermediate biosynthesis; prephenate biosynthesis; prephenate from chorismate: step 1/1. Tyrosine, phenylalanine, and tryptophan moderately enhance chorismate mutase activity at low concentrations, but allosterically inhibit the enzyme at higher concentrations. Catalyzes the Claisen rearrangement of chorismate to prephenate. May play some role in the pathogenicity. The protein is Secreted chorismate mutase of Mycobacterium tuberculosis (strain ATCC 25618 / H37Rv).